The following is a 77-amino-acid chain: Large ribosomal subunit protein bL28 (77 aa).

This sequence belongs to the bacterial ribosomal protein bL28 family.

The protein is Large ribosomal subunit protein bL28 of Acidovorax ebreus (strain TPSY) (Diaphorobacter sp. (strain TPSY)).